The following is a 177-amino-acid chain: MTRGFYIGRFQPFHTGHRRVIEQIATEVDELVVGIGSAGDSHSARNPFTAGERIMMITKALVEFNLVTYAVPIEDLERNAVWVSHVRSMCPKFEVAYSNNPLVIRLFNEAAVEVRQPPMYDRDVLEGAEIRRRMADGDDWESLVPDAVADVVAEIDGVERIQHVADTDANGHDSGLR.

Belongs to the archaeal NMN adenylyltransferase family.

Its subcellular location is the cytoplasm. The catalysed reaction is beta-nicotinamide D-ribonucleotide + ATP + H(+) = diphosphate + NAD(+). It participates in cofactor biosynthesis; NAD(+) biosynthesis; NAD(+) from nicotinamide D-ribonucleotide: step 1/1. This is Nicotinamide-nucleotide adenylyltransferase from Halobacterium salinarum (strain ATCC 29341 / DSM 671 / R1).